The primary structure comprises 576 residues: Coilin (576 aa).

A Phosphoserine modification is found at Ser-105. Residue Thr-122 is modified to Phosphothreonine. Disordered regions lie at residues 125–330 (DCKY…CLMS) and 352–389 (RPGPGLSSQTAGAAGWRRSGSNGGGQAPGASPSVSLPA). Glycyl lysine isopeptide (Lys-Gly) (interchain with G-Cter in SUMO2) cross-links involve residues Lys-127, Lys-151, and Lys-160. A Phosphoserine; by VRK1 and VRK2 modification is found at Ser-184. Glycyl lysine isopeptide (Lys-Gly) (interchain with G-Cter in SUMO2) cross-links involve residues Lys-204 and Lys-209. Over residues 214–225 (QRCSSPKGSARN) the composition is skewed to polar residues. Residues 223–226 (ARNS) form a 1-1 repeat. The 2 X 4 AA repeats of A-R-N-S stretch occupies residues 223-271 (ARNSLVKAKRKGSVSVCSKESPSSSSESESCDESISDGPSKVTLEARNS). The span at 235 to 250 (SVSVCSKESPSSSSES) shows a compositional bias: low complexity. Phosphoserine occurs at positions 248, 250, 256, 271, and 272. The stretch at 268–271 (ARNS) is one 1-2 repeat. Residues 270–285 (NSSEKLPTELSKEEPS) show a composition bias toward basic and acidic residues. Residues Lys-274 and Lys-281 each participate in a glycyl lysine isopeptide (Lys-Gly) (interchain with G-Cter in SUMO2) cross-link. Thr-290 carries the post-translational modification Phosphothreonine. Residues Lys-293 and Lys-297 each participate in a glycyl lysine isopeptide (Lys-Gly) (interchain with G-Cter in SUMO2) cross-link. Ser-301 carries the phosphoserine modification. The segment covering 301 to 320 (SLTPSKGKTSGTTSSSSDSS) has biased composition (low complexity). Position 303 is a phosphothreonine (Thr-303). A 2-1 repeat occupies 386-389 (SLPA). A 2 X 4 AA repeats of S-L-P-A region spans residues 386-520 (SLPASLGRGW…DIEILSSLPA (135 aa)). The required for interaction with SMN stretch occupies residues 392-420 (GRGWGREENLFSWKGAKGRGMRGRGRGRG). The residue at position 403 (Ser-403) is a Phosphoserine. 4 consecutive repeat copies span residues 413-414 (RG), 415-416 (RG), 417-418 (RG), and 419-420 (RG). Residues 413-420 (RGRGRGRG) form a 4 X 2 AA tandem repeats of R-G region. Lys-444 participates in a covalent cross-link: Glycyl lysine isopeptide (Lys-Gly) (interchain with G-Cter in SUMO2). Thr-456 is subject to Phosphothreonine. Residues 460 to 559 (DYSLLPLLAA…ITVFWKELID (100 aa)) enclose the Tudor; atypical domain. Ser-487 and Ser-489 each carry phosphoserine. Lys-496 is covalently cross-linked (Glycyl lysine isopeptide (Lys-Gly) (interchain with G-Cter in SUMO2)). A 2-2 repeat occupies 517 to 520 (SLPA). Phosphoserine is present on Ser-566.

It belongs to the coilin family. In terms of assembly, interacts with ANKS1B. Interacts with SMN1 (via Tudor domain). Interacts (via C-terminus) with AK6. Interacts with WRAP53/TCAB1. Interacts with HMBOX1. Interacts with PSME3; the interaction is inhibited by PSME3IP1. Interacts wit UBL5. In terms of processing, symmetrical dimethylation of arginine residues within the RG repeat region enhances affinity for SMN, and thus localization of SMN complexes to CBs. Post-translationally, phosphorylated by VRK1. Phosphorylation during mitosis is associated with disassembly of CBs. In terms of tissue distribution, found in all the cell types examined.

It localises to the nucleus. The protein localises to the cajal body. Its function is as follows. Component of nuclear coiled bodies, also known as Cajal bodies or CBs, which are involved in the modification and assembly of nucleoplasmic snRNPs. This Homo sapiens (Human) protein is Coilin (COIL).